A 209-amino-acid polypeptide reads, in one-letter code: Probable calcium-binding protein CML36 (209 aa).

The interval 22–59 (SKSPTAFSFGSASSSSGQDCKNSGGDGGGGSVTPTSIL) is disordered. Residues 27–38 (AFSFGSASSSSG) show a composition bias toward low complexity. 4 EF-hand domains span residues 66 to 101 (YSYV…LGPD), 103 to 138 (LTEE…LDPA), 139 to 174 (RDST…IGDE), and 176 to 209 (CTLD…DLQR). Ca(2+) contacts are provided by aspartate 79, aspartate 81, aspartate 83, and aspartate 90. 8 residues coordinate Ca(2+): aspartate 152, aspartate 154, aspartate 156, glutamate 163, aspartate 189, aspartate 191, aspartate 193, and glutamate 200.

In terms of biological role, potential calcium sensor. In Arabidopsis thaliana (Mouse-ear cress), this protein is Probable calcium-binding protein CML36 (CML36).